Consider the following 565-residue polypeptide: Sulfite reductase [NADPH] hemoprotein beta-component (565 aa).

The [4Fe-4S] cluster site is built by cysteine 429, cysteine 435, cysteine 474, and cysteine 478. Cysteine 478 is a binding site for siroheme.

This sequence belongs to the nitrite and sulfite reductase 4Fe-4S domain family. Alpha(8)-beta(8). The alpha component is a flavoprotein, the beta component is a hemoprotein. The cofactor is siroheme. [4Fe-4S] cluster serves as cofactor.

The enzyme catalyses hydrogen sulfide + 3 NADP(+) + 3 H2O = sulfite + 3 NADPH + 4 H(+). The protein operates within sulfur metabolism; hydrogen sulfide biosynthesis; hydrogen sulfide from sulfite (NADPH route): step 1/1. Functionally, component of the sulfite reductase complex that catalyzes the 6-electron reduction of sulfite to sulfide. This is one of several activities required for the biosynthesis of L-cysteine from sulfate. The sequence is that of Sulfite reductase [NADPH] hemoprotein beta-component from Shewanella baltica (strain OS155 / ATCC BAA-1091).